The chain runs to 555 residues: CTP synthase (555 aa).

Residues 1–265 (MTRYIFITGG…GNRVCEKLNI (265 aa)) are amidoligase domain. Ser-13 is a binding site for CTP. Ser-13 is a binding site for UTP. ATP contacts are provided by residues 14-19 (SLGKGI) and Asp-71. Asp-71 and Glu-139 together coordinate Mg(2+). CTP is bound by residues 146 to 148 (DIE), 186 to 191 (KTKPTQ), and Lys-222. UTP contacts are provided by residues 186–191 (KTKPTQ) and Lys-222. Positions 290–541 (TVAVVGKYVD…IKAGLAAKEA (252 aa)) constitute a Glutamine amidotransferase type-1 domain. Residue Gly-351 participates in L-glutamine binding. Residue Cys-378 is the Nucleophile; for glutamine hydrolysis of the active site. L-glutamine is bound by residues 379–382 (LGMQ), Glu-402, and Arg-469. Catalysis depends on residues His-514 and Glu-516.

Belongs to the CTP synthase family. As to quaternary structure, homotetramer.

The catalysed reaction is UTP + L-glutamine + ATP + H2O = CTP + L-glutamate + ADP + phosphate + 2 H(+). It carries out the reaction L-glutamine + H2O = L-glutamate + NH4(+). It catalyses the reaction UTP + NH4(+) + ATP = CTP + ADP + phosphate + 2 H(+). The protein operates within pyrimidine metabolism; CTP biosynthesis via de novo pathway; CTP from UDP: step 2/2. With respect to regulation, allosterically activated by GTP, when glutamine is the substrate; GTP has no effect on the reaction when ammonia is the substrate. The allosteric effector GTP functions by stabilizing the protein conformation that binds the tetrahedral intermediate(s) formed during glutamine hydrolysis. Inhibited by the product CTP, via allosteric rather than competitive inhibition. In terms of biological role, catalyzes the ATP-dependent amination of UTP to CTP with either L-glutamine or ammonia as the source of nitrogen. Regulates intracellular CTP levels through interactions with the four ribonucleotide triphosphates. The chain is CTP synthase from Coxiella burnetii (strain Dugway 5J108-111).